A 570-amino-acid chain; its full sequence is Adenine deaminase 2 (570 aa).

The protein belongs to the metallo-dependent hydrolases superfamily. Adenine deaminase family. Mn(2+) is required as a cofactor.

The catalysed reaction is adenine + H2O + H(+) = hypoxanthine + NH4(+). The polypeptide is Adenine deaminase 2 (Carboxydothermus hydrogenoformans (strain ATCC BAA-161 / DSM 6008 / Z-2901)).